The following is a 335-amino-acid chain: MKDILNALYHQKDLNDGEVKKLFTLIIHEKVSPVQLGAILCALKIKGESFKEISVAATTLLEHAPKPFNSGLDLIDNCGTGGDGLKTINISTIAALIASSMGLPMAKHGSRSVSSHSGSADLLENLGVNIEMNPMQLENCFKQTHFGFLFAPLYHQSFKKSAPLRKELFTKTIFNCLGPLINPLRPKIQLLGVYDKSLCKTMALALKALGVKRAMVVNGGGTDEIVLHDITHACELKNNKILEYDLSAKDFDLPPYDLKELQIENAKESVQACLDILENKGKDSHTMVVVANVASLLYLSHKAKDLKEGVNMTLEHLKTKAPYVHLQKIIRLSHA.

5-phospho-alpha-D-ribose 1-diphosphate is bound by residues Gly79, 82 to 83 (GD), Thr87, 89 to 92 (NIST), 107 to 115 (KHGSRSVSS), and Ser119. Gly79 lines the anthranilate pocket. Ser91 is a Mg(2+) binding site. Arg165 is a binding site for anthranilate. 2 residues coordinate Mg(2+): Asp223 and Glu224.

This sequence belongs to the anthranilate phosphoribosyltransferase family. Homodimer. It depends on Mg(2+) as a cofactor.

The catalysed reaction is N-(5-phospho-beta-D-ribosyl)anthranilate + diphosphate = 5-phospho-alpha-D-ribose 1-diphosphate + anthranilate. It participates in amino-acid biosynthesis; L-tryptophan biosynthesis; L-tryptophan from chorismate: step 2/5. Catalyzes the transfer of the phosphoribosyl group of 5-phosphorylribose-1-pyrophosphate (PRPP) to anthranilate to yield N-(5'-phosphoribosyl)-anthranilate (PRA). This is Anthranilate phosphoribosyltransferase from Helicobacter pylori (strain G27).